The chain runs to 111 residues: Universal stress protein B (111 aa).

The next 2 membrane-spanning stretches (helical) occupy residues 1–21 (MIST…NMAR) and 90–110 (FILT…LAIW).

The protein belongs to the universal stress protein B family.

It localises to the cell inner membrane. This is Universal stress protein B from Erwinia tasmaniensis (strain DSM 17950 / CFBP 7177 / CIP 109463 / NCPPB 4357 / Et1/99).